The following is a 481-amino-acid chain: ATP synthase subunit beta (481 aa).

Residue Gly160–Thr167 coordinates ATP.

It belongs to the ATPase alpha/beta chains family. In terms of assembly, F-type ATPases have 2 components, CF(1) - the catalytic core - and CF(0) - the membrane proton channel. CF(1) has five subunits: alpha(3), beta(3), gamma(1), delta(1), epsilon(1). CF(0) has three main subunits: a(1), b(2) and c(9-12). The alpha and beta chains form an alternating ring which encloses part of the gamma chain. CF(1) is attached to CF(0) by a central stalk formed by the gamma and epsilon chains, while a peripheral stalk is formed by the delta and b chains.

The protein resides in the cell inner membrane. The catalysed reaction is ATP + H2O + 4 H(+)(in) = ADP + phosphate + 5 H(+)(out). Functionally, produces ATP from ADP in the presence of a proton gradient across the membrane. The catalytic sites are hosted primarily by the beta subunits. The chain is ATP synthase subunit beta from Stigmatella aurantiaca.